We begin with the raw amino-acid sequence, 214 residues long: Pyridoxine/pyridoxamine 5'-phosphate oxidase (214 aa).

Substrate contacts are provided by residues 8 to 11 (RLSY) and arginine 66. FMN is bound by residues 61-66 (RTVLLR), 76-77 (FT), lysine 83, and glutamine 105. Positions 123, 127, and 131 each coordinate substrate. A disordered region spans residues 126–146 (SRPRESQLAAHASDPQSAPVS). FMN-binding positions include 141-142 (QS) and tryptophan 187. 193-195 (RMH) lines the substrate pocket. An FMN-binding site is contributed by arginine 197.

Belongs to the pyridoxamine 5'-phosphate oxidase family. Homodimer. Requires FMN as cofactor.

The catalysed reaction is pyridoxamine 5'-phosphate + O2 + H2O = pyridoxal 5'-phosphate + H2O2 + NH4(+). It catalyses the reaction pyridoxine 5'-phosphate + O2 = pyridoxal 5'-phosphate + H2O2. Its pathway is cofactor metabolism; pyridoxal 5'-phosphate salvage; pyridoxal 5'-phosphate from pyridoxamine 5'-phosphate: step 1/1. The protein operates within cofactor metabolism; pyridoxal 5'-phosphate salvage; pyridoxal 5'-phosphate from pyridoxine 5'-phosphate: step 1/1. In terms of biological role, catalyzes the oxidation of either pyridoxine 5'-phosphate (PNP) or pyridoxamine 5'-phosphate (PMP) into pyridoxal 5'-phosphate (PLP). This Deinococcus deserti (strain DSM 17065 / CIP 109153 / LMG 22923 / VCD115) protein is Pyridoxine/pyridoxamine 5'-phosphate oxidase.